We begin with the raw amino-acid sequence, 480 residues long: ATP synthase subunit beta, chloroplastic (480 aa).

Residue 161-168 (GGAGVGKT) participates in ATP binding.

Belongs to the ATPase alpha/beta chains family. In terms of assembly, F-type ATPases have 2 components, CF(1) - the catalytic core - and CF(0) - the membrane proton channel. CF(1) has five subunits: alpha(3), beta(3), gamma(1), delta(1), epsilon(1). CF(0) has four main subunits: a(1), b(1), b'(1) and c(9-12).

The protein resides in the plastid. It is found in the chloroplast thylakoid membrane. It catalyses the reaction ATP + H2O + 4 H(+)(in) = ADP + phosphate + 5 H(+)(out). In terms of biological role, produces ATP from ADP in the presence of a proton gradient across the membrane. The catalytic sites are hosted primarily by the beta subunits. The sequence is that of ATP synthase subunit beta, chloroplastic from Tetradesmus obliquus (Green alga).